We begin with the raw amino-acid sequence, 325 residues long: Reaction center protein M chain (325 aa).

3 consecutive transmembrane segments (helical) span residues 54–80 (LGPL…LASV), 111–140 (NDGG…RARA), and 143–168 (MGTH…RPVL). Residues histidine 183 and histidine 203 each contribute to the (7R,8Z)-bacteriochlorophyll b site. A helical membrane pass occupies residues 198-226 (FYNPFHALSIAFLYGATLLFAMHGATILA). Fe cation-binding residues include histidine 220 and glutamate 235. Tryptophan 253 provides a ligand contact to a ubiquinone. The chain crosses the membrane as a helical span at residues 260–286 (NATTESIHRWAWWFAVLCPLCGGIGIL). Residue histidine 267 participates in Fe cation binding.

This sequence belongs to the reaction center PufL/M/PsbA/D family. Reaction center is composed of four bacteriochlorophylls, two bacteriopheophytins, two ubiquinones, one iron, and three highly hydrophobic polypeptide chains (designated L, M, and H).

The protein localises to the cell inner membrane. In terms of biological role, the reaction center is a membrane-bound complex that mediates the initial photochemical event in the electron transfer process of photosynthesis. In Rubrivivax gelatinosus (strain NBRC 100245 / IL144), this protein is Reaction center protein M chain (pufM).